We begin with the raw amino-acid sequence, 633 residues long: GRAM domain-containing protein 4 (633 aa).

Disordered stretches follow at residues 1-46 (MGIA…VRPR), 72-109 (LAES…AGPG), and 182-216 (VLKA…RSQG). Over residues 27 to 39 (PWDKGLSGREPPR) the composition is skewed to basic and acidic residues. 2 positions are modified to phosphoserine: Ser75 and Ser79. Positions 95 to 104 (SPRDSEELRD) are enriched in basic and acidic residues. A coiled-coil region spans residues 134-190 (HLEIALLEKHFLQEELRKLREETNSEMLRQELDRERQRRIELEQKMQEVLKARSEEQ). The span at 190 to 205 (QPAQPQQPPKGQSQAS) shows a compositional bias: low complexity. 3 helical membrane-spanning segments follow: residues 295-315 (VYMN…LAIL), 389-409 (TTQK…FFPY), and 411-431 (LVGL…DFIF). One can recognise a GRAM domain in the interval 500–578 (GNFHEIFNLT…MDITDIQKYK (79 aa)).

Interacts with RTN4 (isoform B).

Its subcellular location is the mitochondrion membrane. The protein localises to the endoplasmic reticulum membrane. Functionally, plays a role as a mediator of E2F1-induced apoptosis in the absence of p53/TP53. Inhibits TLR9 response to nucelic acids and regulates TLR9-mediated innate immune response. The chain is GRAM domain-containing protein 4 from Mus musculus (Mouse).